The primary structure comprises 448 residues: Probable glycine dehydrogenase (decarboxylating) subunit 1 (448 aa).

This sequence belongs to the GcvP family. N-terminal subunit subfamily. As to quaternary structure, the glycine cleavage system is composed of four proteins: P, T, L and H. In this organism, the P 'protein' is a heterodimer of two subunits.

The enzyme catalyses N(6)-[(R)-lipoyl]-L-lysyl-[glycine-cleavage complex H protein] + glycine + H(+) = N(6)-[(R)-S(8)-aminomethyldihydrolipoyl]-L-lysyl-[glycine-cleavage complex H protein] + CO2. The glycine cleavage system catalyzes the degradation of glycine. The P protein binds the alpha-amino group of glycine through its pyridoxal phosphate cofactor; CO(2) is released and the remaining methylamine moiety is then transferred to the lipoamide cofactor of the H protein. This Parvibaculum lavamentivorans (strain DS-1 / DSM 13023 / NCIMB 13966) protein is Probable glycine dehydrogenase (decarboxylating) subunit 1.